Reading from the N-terminus, the 162-residue chain is MAILKWKLSSNQISTTETADIQTDNDNRPPQAAAKRRRPADTTDTAQPLTKLFCADPALDNRTARTATNCTNKQRTVCSSNVAPIVHLKGESNSLKCLRYRLKPYKELYSSMSSTWHWTSDNKNSKNGIVTVTFVTEQQQQMFLGTVKIPPTVQISTGFMTL.

Polar residues predominate over residues 15–24 (TTETADIQTD). The tract at residues 15 to 47 (TTETADIQTDNDNRPPQAAAKRRRPADTTDTAQ) is disordered.

It belongs to the papillomaviridae E8^E2C protein family.

The protein localises to the host nucleus. In terms of biological role, plays a role in limiting the replication of viral DNA in keratinocytes. Recruits the host NCoR/SMRT complex to viral replication foci to mediate repression of both viral replication and transcription. This chain is Protein E8^E2C, found in Homo sapiens (Human).